Consider the following 114-residue polypeptide: MGPRLLFWALLCLLGTGPVEAGVTQSPTHLIKTRGQQATLRCSPISGHTSVYWYQQALGLGLQFLLWYDEGEERNRGNFPPRFSGRQFPNYSSELNVNALELEDSALYLCASSL.

An N-terminal signal peptide occupies residues 1–21 (MGPRLLFWALLCLLGTGPVEA). Positions 22-114 (GVTQSPTHLI…SALYLCASSL (93 aa)) constitute an Ig-like domain. The cysteines at positions 42 and 110 are disulfide-linked. Asparagine 90 is a glycosylation site (N-linked (GlcNAc...) asparagine).

In terms of assembly, alpha-beta TR is a heterodimer composed of an alpha and beta chain; disulfide-linked. The alpha-beta TR is associated with the transmembrane signaling CD3 coreceptor proteins to form the TR-CD3 (TcR or TCR). The assembly of alpha-beta TR heterodimers with CD3 occurs in the endoplasmic reticulum where a single alpha-beta TR heterodimer associates with one CD3D-CD3E heterodimer, one CD3G-CD3E heterodimer and one CD247 homodimer forming a stable octameric structure. CD3D-CD3E and CD3G-CD3E heterodimers preferentially associate with TR alpha and TR beta chains, respectively. The association of the CD247 homodimer is the last step of TcR assembly in the endoplasmic reticulum and is required for transport to the cell surface.

It is found in the cell membrane. V region of the variable domain of T cell receptor (TR) beta chain that participates in the antigen recognition. Alpha-beta T cell receptors are antigen specific receptors which are essential to the immune response and are present on the cell surface of T lymphocytes. Recognize peptide-major histocompatibility (MH) (pMH) complexes that are displayed by antigen presenting cells (APC), a prerequisite for efficient T cell adaptive immunity against pathogens. Binding of alpha-beta TR to pMH complex initiates TR-CD3 clustering on the cell surface and intracellular activation of LCK that phosphorylates the ITAM motifs of CD3G, CD3D, CD3E and CD247 enabling the recruitment of ZAP70. In turn ZAP70 phosphorylates LAT, which recruits numerous signaling molecules to form the LAT signalosome. The LAT signalosome propagates signal branching to three major signaling pathways, the calcium, the mitogen-activated protein kinase (MAPK) kinase and the nuclear factor NF-kappa-B (NF-kB) pathways, leading to the mobilization of transcription factors that are critical for gene expression and essential for T cell growth and differentiation. The T cell repertoire is generated in the thymus, by V-(D)-J rearrangement. This repertoire is then shaped by intrathymic selection events to generate a peripheral T cell pool of self-MH restricted, non-autoaggressive T cells. Post-thymic interaction of alpha-beta TR with the pMH complexes shapes TR structural and functional avidity. This chain is T cell receptor beta variable 5-8, found in Homo sapiens (Human).